Reading from the N-terminus, the 319-residue chain is Ferrochelatase (319 aa).

Residues His193 and Glu274 each contribute to the Fe cation site.

This sequence belongs to the ferrochelatase family.

The protein localises to the cytoplasm. It carries out the reaction heme b + 2 H(+) = protoporphyrin IX + Fe(2+). It functions in the pathway porphyrin-containing compound metabolism; protoheme biosynthesis; protoheme from protoporphyrin-IX: step 1/1. In terms of biological role, catalyzes the ferrous insertion into protoporphyrin IX. This chain is Ferrochelatase, found in Actinobacillus pleuropneumoniae serotype 7 (strain AP76).